We begin with the raw amino-acid sequence, 255 residues long: H-2 class II histocompatibility antigen, E-D alpha chain (255 aa).

The N-terminal stretch at 1–25 (MATIGALVLRFFFIAVLMSSQKSWA) is a signal peptide. An alpha-1 region spans residues 26–109 (IKEEHTIIQA…ERSNNTPDAN (84 aa)). Residues 26-216 (IKEEHTIIQA…EKTLLPETKE (191 aa)) are Extracellular-facing. Residues 110-203 (VAPEVTVLSR…GLEEPLRKTW (94 aa)) are alpha-2. Residues 112 to 204 (PEVTVLSRSP…LEEPLRKTWE (93 aa)) enclose the Ig-like C1-type domain. A disulfide bridge connects residues Cys-132 and Cys-188. N-linked (GlcNAc...) asparagine glycosylation occurs at Asn-143. A connecting peptide region spans residues 204–216 (EFEEKTLLPETKE). A helical transmembrane segment spans residues 217–242 (NVMCALGLFVGLVGIVVGIILIMKGI). The Cytoplasmic portion of the chain corresponds to 243-255 (KKRNVVERRQGAL).

The protein belongs to the MHC class II family.

It localises to the membrane. In Mus musculus (Mouse), this protein is H-2 class II histocompatibility antigen, E-D alpha chain (H2-Ea).